A 453-amino-acid chain; its full sequence is Allantoinase (453 aa).

Positions 59, 61, 146, 186, 242, and 315 each coordinate Zn(2+). The residue at position 146 (Lys-146) is an N6-carboxylysine.

It belongs to the metallo-dependent hydrolases superfamily. Allantoinase family. As to quaternary structure, homotetramer. Zn(2+) is required as a cofactor. Post-translationally, carboxylation allows a single lysine to coordinate two zinc ions.

It catalyses the reaction (S)-allantoin + H2O = allantoate + H(+). The protein operates within nitrogen metabolism; (S)-allantoin degradation; allantoate from (S)-allantoin: step 1/1. Its function is as follows. Catalyzes the conversion of allantoin (5-ureidohydantoin) to allantoic acid by hydrolytic cleavage of the five-member hydantoin ring. The polypeptide is Allantoinase (Escherichia coli (strain SMS-3-5 / SECEC)).